Here is a 551-residue protein sequence, read N- to C-terminus: Rqc2 homolog RqcH (551 aa).

Residues 363–551 (YQKLKEAVKY…SKKIASMKKS (189 aa)) form a required for fibronectin binding region.

The protein belongs to the NEMF family. As to quaternary structure, associates with stalled 50S ribosomal subunits, binds to RqcP. Interacts with human fibronectin.

It is found in the cell surface. The protein resides in the cytoplasm. Functionally, key component of the ribosome quality control system (RQC), a ribosome-associated complex that mediates the extraction of incompletely synthesized nascent chains from stalled ribosomes and their subsequent degradation. RqcH recruits Ala-charged tRNA, and with RqcP directs the elongation of stalled nascent chains on 50S ribosomal subunits, leading to non-templated C-terminal alanine extensions (Ala tail). The Ala tail promotes nascent chain degradation. May add between 1 and at least 8 Ala residues. Binds to stalled 50S ribosomal subunits. In terms of biological role, recombinant protein binds to immobilized human fibronectin; binding is saturable and competed by heparin. Recombinant protein inhibits binding of whole cells to fibronectin. The polypeptide is Rqc2 homolog RqcH (Streptococcus pneumoniae (strain ATCC BAA-255 / R6)).